A 146-amino-acid chain; its full sequence is Kappa-casein (146 aa).

Threonine 107 and threonine 112 each carry an O-linked (GalNAc...) threonine glycan. At serine 125 the chain carries Phosphoserine; alternate. An O-linked (GalNAc...) serine; alternate glycan is attached at serine 125. O-linked (GalNAc...) threonine glycosylation occurs at threonine 142. Serine 143 is modified (phosphoserine).

This sequence belongs to the kappa-casein family. In terms of tissue distribution, mammary gland specific. Secreted in milk.

It localises to the secreted. Functionally, kappa-casein stabilizes micelle formation, preventing casein precipitation in milk. The chain is Kappa-casein (CSN3) from Tapirus indicus (Asiatic tapir).